Here is a 351-residue protein sequence, read N- to C-terminus: Adenine deaminase (351 aa).

3 residues coordinate Zn(2+): H20, H22, and H200. E203 functions as the Proton donor in the catalytic mechanism. D281 contacts Zn(2+). D282 is a binding site for substrate.

Belongs to the metallo-dependent hydrolases superfamily. Adenosine and AMP deaminases family. Adenine deaminase type 2 subfamily. It depends on Zn(2+) as a cofactor.

It catalyses the reaction adenine + H2O + H(+) = hypoxanthine + NH4(+). Catalyzes the hydrolytic deamination of adenine to hypoxanthine. Plays an important role in the purine salvage pathway and in nitrogen catabolism. In Cupriavidus pinatubonensis (strain JMP 134 / LMG 1197) (Cupriavidus necator (strain JMP 134)), this protein is Adenine deaminase.